Consider the following 74-residue polypeptide: Translation initiation factor IF-1 (74 aa).

An S1-like domain is found at 1–72; sequence MSKQDLIEME…TKGRITYRLR (72 aa).

It belongs to the IF-1 family. Component of the 30S ribosomal translation pre-initiation complex which assembles on the 30S ribosome in the order IF-2 and IF-3, IF-1 and N-formylmethionyl-tRNA(fMet); mRNA recruitment can occur at any time during PIC assembly.

The protein resides in the cytoplasm. Its function is as follows. One of the essential components for the initiation of protein synthesis. Stabilizes the binding of IF-2 and IF-3 on the 30S subunit to which N-formylmethionyl-tRNA(fMet) subsequently binds. Helps modulate mRNA selection, yielding the 30S pre-initiation complex (PIC). Upon addition of the 50S ribosomal subunit IF-1, IF-2 and IF-3 are released leaving the mature 70S translation initiation complex. The chain is Translation initiation factor IF-1 from Trichodesmium erythraeum (strain IMS101).